Consider the following 304-residue polypeptide: Non-specific ribonucleoside hydrolase RihC (304 aa).

His-233 is an active-site residue.

This sequence belongs to the IUNH family. RihC subfamily.

In terms of biological role, hydrolyzes both purine and pyrimidine ribonucleosides with a broad-substrate specificity. The sequence is that of Non-specific ribonucleoside hydrolase RihC from Klebsiella pneumoniae subsp. pneumoniae (strain ATCC 700721 / MGH 78578).